A 309-amino-acid chain; its full sequence is Coenzyme PQQ synthesis protein B (309 aa).

The protein belongs to the PqqB family.

Its pathway is cofactor biosynthesis; pyrroloquinoline quinone biosynthesis. In terms of biological role, may be involved in the transport of PQQ or its precursor to the periplasm. The protein is Coenzyme PQQ synthesis protein B of Nitrosococcus oceani (strain ATCC 19707 / BCRC 17464 / JCM 30415 / NCIMB 11848 / C-107).